Reading from the N-terminus, the 1230-residue chain is Cullin-associated NEDD8-dissociated protein 1 (1230 aa).

At Ala2 the chain carries N-acetylalanine. 12 HEAT repeats span residues 2–39 (ASASYHISNLLEKMTSSDKDFRFMATNDLMTELQKDSI), 44–81 (DSERKVVKMILKLLEDKNGEVQNLAVKCLGPLVSKVKE), 83–119 (QVETIVDTLCTNMLSDKEQLRDISSIGLKTVIGELPP), 131–165 (CKKITGRLTSAIAKQEDVSVQLEALDIMADMLSRQ), 171–208 (NFHPSILTCLLPQLTSPRLAVRKRTIIALGHLVMSCGN), 210–247 (VFVDLIEHLLSELSKNDSMSTTRTYIQCIAAISRQAGH), 248–282 (RIGEYLEKIIPLVVKFCNVDDDELREYCIQAFESF), 289–366 (EVYP…TRHE), 370–407 (EFYKTVSPALISRFKEREENVKADVFHAYLSLLKQTRP), 424–467 (PLTM…VLPG), 471–510 (QHIPVLVPGIIFSLNDKSSSSNLKIDALSCLYVILCNHSP), and 515–552 (PHVQALVPPVVACVGDPFYKITSEALLVTQQLVKVIRP). Lys55 is modified (N6-acetyllysine). Positions 315 to 344 (DEDEDENAMDADGGDDDDQGSDDEYSDDDD) are disordered. Residue Ser335 is modified to Phosphoserine. Position 558 is a phosphoserine (Ser558). HEAT repeat units follow at residues 563–602 (PYIKDLFTCTIKRLKAADIDQEVKERAISCMGQIICNLGD), 606–643 (SDLPNTLQIFLERLKNEITRLTTVKALTLIAGSPLKID), 646–683 (PVLGEGVPILASFLRKNQRALKLGTLSALDILIKNYSD), 688–725 (AMIDAVLDELPPLISESDMHVSQMAISFLTTLAKVYPS), 729–768 (KISGSILNELIGLVRSPLLQGGALSAMLDFFQALVVTGTN), 770–808 (LGYMDLLRMLTGPVYSQSTALTHKQSYYSIAKCVAALTR), 809–845 (ACPKEGPAVVGQFIQDVKNSRSTDSIRLLALLSLGEV), 852–889 (SGQLELKSVILEAFSSPSEEVKSAASYALGSISVGNLP), 890–927 (EYLPFVLQEITSQPKRQYLLLHSLKEIISSASVVGLKP), 928–960 (YVENIWALLLKHCECAEEGTRNVVAECLGKLTL), 961–998 (IDPETLLPRLKGYLISGSSYARSSVVTAVKFTISDHPQ), 1002–1039 (PLLKNCIGDFLKTLEDPDLNVRRVALVTFNSAAHNKPS), 1043–1097 (DLLD…DSCL), 1099–1133 (RLDIFEFLNHVEDGLKDHYDIKMLTFLMLVRLSTL), and 1140–1189 (QRLD…IPEA). The residue at position 971 (Lys971) is an N6-acetyllysine.

This sequence belongs to the CAND family. Interacts with TBP. Part of a complex that contains CUL1 and RBX1. Interacts with unneddylated cullins: interacts with CUL1, CUL2, CUL3, CUL4A, CUL4B and CUL5. Does not bind neddylated CUL1. Interaction with cullins is abolished in presence of COMMD1, which antagonizes with CAND1 for interacting with cullins. Interacts with ERCC6. Interacts with DCUN1D1, DCUN1D2, DCUN1D3, DCUN1D4 and DCUN1D5; these interactions are bridged by cullins and strongly inhibits the neddylation of cullins.

The protein resides in the cytoplasm. It localises to the nucleus. Key assembly factor of SCF (SKP1-CUL1-F-box protein) E3 ubiquitin ligase complexes that promotes the exchange of the substrate-recognition F-box subunit in SCF complexes, thereby playing a key role in the cellular repertoire of SCF complexes. Acts as a F-box protein exchange factor. The exchange activity of CAND1 is coupled with cycles of neddylation conjugation: in the deneddylated state, cullin-binding CAND1 binds CUL1-RBX1, increasing dissociation of the SCF complex and promoting exchange of the F-box protein. Probably plays a similar role in other cullin-RING E3 ubiquitin ligase complexes. The chain is Cullin-associated NEDD8-dissociated protein 1 (CAND1) from Bos taurus (Bovine).